Consider the following 289-residue polypeptide: MADNIQRGEEFEKKAEKKISGWGLFGSKYEDAADFYDKAANCFKLAKSWDRAGSTYVKLSTVIQSSDSKHEAAQAYADAGHCYKKTSAKEAISCLEQAAYLFLDNGRFNMAGKYYKEIAELYELEQNFEQAIIYFEKAADIYQSEEATTAANQCNAKVAQFAAQLEQYQKAIQIYEDIGRPSLNNNLLKYGVKGHLLNAGICQLCKGDVVAITNALDRYQEMDPTFSGTREYKLLVDLAAAVDEEDVVKFTDAVKEFDSMTQLDAWKTTLLLRVKEAIKAKELEEDDLT.

One copy of the TPR repeat lies at 112–145 (GKYYKEIAELYELEQNFEQAIIYFEKAADIYQSE).

It belongs to the SNAP family.

It localises to the membrane. Functionally, required for vesicular transport between the endoplasmic reticulum and the Golgi apparatus. The protein is Alpha-soluble NSF attachment protein of Vitis vinifera (Grape).